The primary structure comprises 638 residues: MPEITLPDGSKKVFEKPVTIQEIAQSIGSGLAKATIAGKVNDVLFDATLPIDNDSKVVIITSRDKDGIEIIRHSFAHLIGHAVKQLYPNIKMAIGPVIDNGFYYDIFSEYRFTPEDLIKIENRINNLIKKNYDVEILQVTKKEAIKTFQERDETFKLRIIEEIPDEGLINLYKHEEYIDMCRGPHVPNTCHLRHFKLLKLSGSYWRGNSENESLQRIYGTAWAKEKELNDYLKRIEEAEKRDHRKLGKKHSLFHIQEESPGMIFWHPNGWTIYQVLEKYVREILNKNDYLEIKTPQAVDKSLWEKSGHWDKFREDMFTTASENRTYAIKPMNCPCHIQVFNQGLKSYKDLPIRLAEFGSCHRNEPSGALHGLMRVRNFTQDDAHIFCTEEQIQAEVSTFIDLVFEVYKTFGFDEIIIKLSTRPEKRVGSENIWDKSEEALMKALDNKSLKWVLQPGEGAFYGPKIEFSLKDCLDRVWQCGTIQVDFSMPIRLDATYIDLNNEKRNPVMLHRAILGSFERFIGILIEQYEAKFPIWLAPYQIILLSITDRNIEKCLKFNQLINSKGYRSKVDIRNEKIGYKIREATIGRIPLIAVIGDKEEQFDSVALRALDGKNLGIFKLDDLYKLMNNLIEKKGRTE.

Residues 1-61 (MPEITLPDGS…DNDSKVVIIT (61 aa)) form the TGS domain. The catalytic stretch occupies residues 242 to 533 (DHRKLGKKHS…LIEQYEAKFP (292 aa)). Zn(2+)-binding residues include C333, H384, and H510.

This sequence belongs to the class-II aminoacyl-tRNA synthetase family. In terms of assembly, homodimer. The cofactor is Zn(2+).

Its subcellular location is the cytoplasm. It catalyses the reaction tRNA(Thr) + L-threonine + ATP = L-threonyl-tRNA(Thr) + AMP + diphosphate + H(+). Catalyzes the attachment of threonine to tRNA(Thr) in a two-step reaction: L-threonine is first activated by ATP to form Thr-AMP and then transferred to the acceptor end of tRNA(Thr). Also edits incorrectly charged L-seryl-tRNA(Thr). This chain is Threonine--tRNA ligase, found in Prochlorococcus marinus subsp. pastoris (strain CCMP1986 / NIES-2087 / MED4).